Reading from the N-terminus, the 339-residue chain is HTH-type transcriptional regulator PtxS (339 aa).

Residues 12–67 (VTISEVARVAGVSKATVSRYIGGDRQLLAEATAKRLEEVIERLGYRPNQMARGLKR) form the HTH lacI-type domain. Residues 14 to 33 (ISEVARVAGVSKATVSRYIG) constitute a DNA-binding region (H-T-H motif).

Homodimer in solution.

Its activity is regulated as follows. 2-ketogluconate acts as a molecular effector and causes dissociation of PtxS from its target promoter. In terms of biological role, negatively regulates glucose metabolism by binding directly to the promoter region of the kgu and gad operons. It also negatively regulates its own synthesis. This Pseudomonas putida (strain ATCC 47054 / DSM 6125 / CFBP 8728 / NCIMB 11950 / KT2440) protein is HTH-type transcriptional regulator PtxS.